A 594-amino-acid polypeptide reads, in one-letter code: Glutamate decarboxylase 1 (594 aa).

Over residues 1 to 13 (MASSTPSSSATSS) the composition is skewed to low complexity. The segment at 1–25 (MASSTPSSSATSSNAGPDPNTTNLR) is disordered. The residue at position 78 (Ser78) is a Phosphoserine. Position 190 to 192 (190 to 192 (QLS)) interacts with 4-aminobutanoate. Lys405 is modified (N6-(pyridoxal phosphate)lysine). Arg567 lines the 4-aminobutanoate pocket.

It belongs to the group II decarboxylase family. In terms of assembly, homodimer. Pyridoxal 5'-phosphate serves as cofactor.

It catalyses the reaction L-glutamate + H(+) = 4-aminobutanoate + CO2. In terms of biological role, catalyzes the synthesis of the inhibitory neurotransmitter gamma-aminobutyric acid (GABA) with pyridoxal 5'-phosphate as cofactor. The sequence is that of Glutamate decarboxylase 1 (GAD1) from Sus scrofa (Pig).